The following is a 457-amino-acid chain: Protein N-terminal amidase (457 aa).

The CN hydrolase domain occupies L19–F453. E63 serves as the catalytic Proton acceptor. Catalysis depends on K136, which acts as the Proton donor. The active-site Nucleophile is the C187.

Belongs to the carbon-nitrogen hydrolase superfamily.

In terms of biological role, deamidates N-terminal Asn and Gln. Component of a targeting complex in the N-end rule pathway. This Saccharomyces cerevisiae (strain ATCC 204508 / S288c) (Baker's yeast) protein is Protein N-terminal amidase (NTA1).